The following is a 286-amino-acid chain: MKNILAIQSHVVFGHAGNSAAEFPMRRLGANVWPLNTVQFSNHTQYGKWTGCVMPPSHLTEIVQGIADIGQLAHCDAVLSGYLGSAEQGEHILGIVRQVKAANPQAKYFCDPVMGHPEKGCIVAPGVAEFHVRYALPASDIIAPNLIELEILSKHSVNNVNDAVQAARELIAQGPEIVLVKHLARAGYSSERFEMLLVTAQEAWHISRPLVDFGSRQPVGVGDVTSGLLLVKLLQGATLQQALEHVTAAVYEIMIATKTMQEYELQVVAAQDRIANPEHYFSATRL.

Substrate contacts are provided by residues Ser9 and 44–45 (TQ). ATP is bound by residues Asp111, Ala143, Glu148, Lys181, and 208-211 (RPLV). Asp223 serves as a coordination point for substrate.

It belongs to the pyridoxine kinase family. PdxY subfamily. Homodimer. Mg(2+) serves as cofactor.

It carries out the reaction pyridoxal + ATP = pyridoxal 5'-phosphate + ADP + H(+). It participates in cofactor metabolism; pyridoxal 5'-phosphate salvage; pyridoxal 5'-phosphate from pyridoxal: step 1/1. Functionally, pyridoxal kinase involved in the salvage pathway of pyridoxal 5'-phosphate (PLP). Catalyzes the phosphorylation of pyridoxal to PLP. This chain is Pyridoxal kinase PdxY, found in Salmonella paratyphi A (strain ATCC 9150 / SARB42).